The sequence spans 83 residues: Large ribosomal subunit protein bL31B (83 aa).

The protein belongs to the bacterial ribosomal protein bL31 family. Type B subfamily. Part of the 50S ribosomal subunit.

This is Large ribosomal subunit protein bL31B from Levilactobacillus brevis (strain ATCC 367 / BCRC 12310 / CIP 105137 / JCM 1170 / LMG 11437 / NCIMB 947 / NCTC 947) (Lactobacillus brevis).